The primary structure comprises 268 residues: E3 ubiquitin-protein ligase IAP-3 (268 aa).

BIR repeat units lie at residues Lys18 to Val84 and Glu111 to Val178. Residues Cys148, Cys151, His168, and Cys175 each coordinate Zn(2+). The RING-type zinc-finger motif lies at Cys221–Arg256.

Belongs to the IAP family. In terms of processing, auto-ubiquitinated.

The catalysed reaction is S-ubiquitinyl-[E2 ubiquitin-conjugating enzyme]-L-cysteine + [acceptor protein]-L-lysine = [E2 ubiquitin-conjugating enzyme]-L-cysteine + N(6)-ubiquitinyl-[acceptor protein]-L-lysine.. Functionally, RING-finger E3 ubiquitin ligase required to prevent cellular apoptosis in infected cells. Ubiquitinates and subsequently targets host pro-apoptotic cellular proteins such as HID for degradation by the proteasome. The sequence is that of E3 ubiquitin-protein ligase IAP-3 (IAP3) from Orgyia pseudotsugata multicapsid polyhedrosis virus (OpMNPV).